Here is a 1097-residue protein sequence, read N- to C-terminus: Leukemia inhibitory factor receptor (1097 aa).

Positions 1 to 44 are cleaved as a signal peptide; that stretch reads MMDIYVCLKRPSWMVDNKRMRTASNFQWLLSTFILLYLMNQVNS. Residues 45–833 lie on the Extracellular side of the membrane; sequence QKKGAPHDLK…SMYVVTKENS (789 aa). Positions 49–138 constitute a Fibronectin type-III 1 domain; it reads APHDLKCVTN…EQNVSLIPDT (90 aa). 2 disulfides stabilise this stretch: Cys-55–Cys-65 and Cys-82–Cys-90. N-linked (GlcNAc...) asparagine glycans are attached at residues Asn-64, Asn-85, Asn-131, Asn-143, Asn-191, Asn-243, and Asn-303. A disulfide bridge connects residues Cys-213 and Cys-270. Fibronectin type-III domains lie at 335–434, 435–534, 538–629, 627–719, and 724–833; these read TPQQ…VYPH, TPTS…TEAS, GPDT…IPND, PNDD…IGYI, and PIVA…KENS. Cys-341 and Cys-351 are disulfide-bonded. Asn-390, Asn-407, Asn-426, Asn-445, Asn-481, and Asn-489 each carry an N-linked (GlcNAc...) asparagine glycan. Residues Cys-466 and Cys-511 are joined by a disulfide bond. A WSXWS motif motif is present at residues 519–523; it reads WSKWS. Residues Asn-572, Asn-652, Asn-663, Asn-680, Asn-729, and Asn-787 are each glycosylated (N-linked (GlcNAc...) asparagine). The helical transmembrane segment at 834–858 threads the bilayer; it reads VGLIIAILIPVAVAVIVGVVTSILC. The Cytoplasmic segment spans residues 859–1097; it reads YRKREWIKET…TNFFQNKPND (239 aa). The Box 1 motif signature appears at 869–877; the sequence is FYPDIPNPE. Ser-927 is subject to Phosphoserine. The interval 983–1005 is disordered; the sequence is PQAKPEEEQENDPVGGAGYKPQM. A Phosphoserine modification is found at Ser-1044. The segment at 1066-1097 is disordered; that stretch reads RQFLIPPKDEDSPKSNGGGWSFTNFFQNKPND. Over residues 1086 to 1097 the composition is skewed to polar residues; sequence SFTNFFQNKPND.

The protein belongs to the type I cytokine receptor family. Type 2 subfamily. In terms of assembly, heterodimer composed of LIFR and IL6ST. The heterodimer formed by LIFR and IL6ST interacts with the complex formed by CNTF and CNTFR.

The protein resides in the cell membrane. It is found in the secreted. In terms of biological role, signal-transducing molecule. May have a common pathway with IL6ST. The soluble form inhibits the biological activity of LIF by blocking its binding to receptors on target cells. This chain is Leukemia inhibitory factor receptor (LIFR), found in Homo sapiens (Human).